We begin with the raw amino-acid sequence, 385 residues long: Succinate--CoA ligase [ADP-forming] subunit beta (385 aa).

An ATP-grasp domain is found at 9–243 (KEILSAYGIP…YSQLDTLEIN (235 aa)). ATP is bound by residues Lys45, 52 to 54 (GRG), Glu98, Val101, and Glu106. Mg(2+) contacts are provided by Asn198 and Asp212. Substrate is bound by residues Asn263 and 320–322 (GIM).

Belongs to the succinate/malate CoA ligase beta subunit family. In terms of assembly, heterotetramer of two alpha and two beta subunits. Mg(2+) is required as a cofactor.

It carries out the reaction succinate + ATP + CoA = succinyl-CoA + ADP + phosphate. The catalysed reaction is GTP + succinate + CoA = succinyl-CoA + GDP + phosphate. The protein operates within carbohydrate metabolism; tricarboxylic acid cycle; succinate from succinyl-CoA (ligase route): step 1/1. Functionally, succinyl-CoA synthetase functions in the citric acid cycle (TCA), coupling the hydrolysis of succinyl-CoA to the synthesis of either ATP or GTP and thus represents the only step of substrate-level phosphorylation in the TCA. The beta subunit provides nucleotide specificity of the enzyme and binds the substrate succinate, while the binding sites for coenzyme A and phosphate are found in the alpha subunit. The chain is Succinate--CoA ligase [ADP-forming] subunit beta from Geobacter sulfurreducens (strain ATCC 51573 / DSM 12127 / PCA).